The sequence spans 322 residues: Transmembrane protein 171 (322 aa).

A run of 4 helical transmembrane segments spans residues 22-42 (IFFLFVFGAALLCVGVLLSIF), 57-77 (IVLKIAGPSCAVVGLGAVILA), 112-132 (LIFGFLFLTSGMLISILGIWV), and 159-179 (FLSLQIMGPLVVLVGLCFFVV). The segment at 223-322 (PPPYFPESSA…LGAPSDASPP (100 aa)) is disordered. Residues 228 to 241 (PESSAAAPSPGANS) show a composition bias toward low complexity. Polar residues-rich tracts occupy residues 242–267 (LHQIENPPSYSSLFNYGTPTPENQGA) and 279–289 (ISGQGSSSERS).

The protein localises to the membrane. The chain is Transmembrane protein 171 (Tmem171) from Mus musculus (Mouse).